The primary structure comprises 496 residues: Glycerol kinase (496 aa).

T11 contacts ADP. T11, T12, and S13 together coordinate ATP. Position 11 (T11) interacts with sn-glycerol 3-phosphate. R15 is a binding site for ADP. Sn-glycerol 3-phosphate-binding residues include R81, E82, Y133, and D242. 5 residues coordinate glycerol: R81, E82, Y133, D242, and Q243. Residues T264 and G307 each coordinate ADP. ATP-binding residues include T264, G307, and Q311. N413 lines the ADP pocket.

It belongs to the FGGY kinase family.

It catalyses the reaction glycerol + ATP = sn-glycerol 3-phosphate + ADP + H(+). Its pathway is polyol metabolism; glycerol degradation via glycerol kinase pathway; sn-glycerol 3-phosphate from glycerol: step 1/1. Its activity is regulated as follows. Inhibited by fructose 1,6-bisphosphate (FBP). Functionally, key enzyme in the regulation of glycerol uptake and metabolism. Catalyzes the phosphorylation of glycerol to yield sn-glycerol 3-phosphate. In Borrelia duttonii (strain Ly), this protein is Glycerol kinase.